Consider the following 185-residue polypeptide: NOP protein chaperone 1 (185 aa).

Positions 1 to 40 (MEVHGKPKASPSCSSPTRDSSGVPVSKELLTAGSDGRGGI) are disordered. Residues 10-21 (SPSCSSPTRDSS) are compositionally biased toward low complexity. A phosphoserine mark is found at S34 and S66. The tract at residues 118–185 (FEMNQSDSKE…LDSPASKKKK (68 aa)) is disordered. Over residues 143 to 152 (SESEDEDDSI) the composition is skewed to acidic residues. At S178 the chain carries Phosphoserine.

Interacts with NOP58, RUVBL1 and RUVBL2; the interactions are direct and NOPCHAP1 bridges the association of NOP58 with RUVBL1:RUVBL2 even in absence of snoRNAs. The interactions with RUVBL1 and RUVBL2 are disrupted upon ATP binding.

The protein resides in the nucleus. In terms of biological role, client-loading PAQosome/R2TP complex cofactor that selects NOP58 to promote box C/D small nucleolar ribonucleoprotein (snoRNP) assembly. Acts as a bridge between NOP58 and the R2TP complex via RUVBL1:RUVBL2. This is NOP protein chaperone 1 from Homo sapiens (Human).